A 244-amino-acid polypeptide reads, in one-letter code: 1-(5-phosphoribosyl)-5-[(5-phosphoribosylamino)methylideneamino] imidazole-4-carboxamide isomerase (244 aa).

The active-site Proton acceptor is the Asp8. Catalysis depends on Asp129, which acts as the Proton donor.

The protein belongs to the HisA/HisF family.

The protein resides in the cytoplasm. The enzyme catalyses 1-(5-phospho-beta-D-ribosyl)-5-[(5-phospho-beta-D-ribosylamino)methylideneamino]imidazole-4-carboxamide = 5-[(5-phospho-1-deoxy-D-ribulos-1-ylimino)methylamino]-1-(5-phospho-beta-D-ribosyl)imidazole-4-carboxamide. It functions in the pathway amino-acid biosynthesis; L-histidine biosynthesis; L-histidine from 5-phospho-alpha-D-ribose 1-diphosphate: step 4/9. This chain is 1-(5-phosphoribosyl)-5-[(5-phosphoribosylamino)methylideneamino] imidazole-4-carboxamide isomerase, found in Allorhizobium ampelinum (strain ATCC BAA-846 / DSM 112012 / S4) (Agrobacterium vitis (strain S4)).